The sequence spans 147 residues: Large ribosomal subunit protein uL13 (147 aa).

It belongs to the universal ribosomal protein uL13 family. In terms of assembly, part of the 50S ribosomal subunit.

This protein is one of the early assembly proteins of the 50S ribosomal subunit, although it is not seen to bind rRNA by itself. It is important during the early stages of 50S assembly. The polypeptide is Large ribosomal subunit protein uL13 (Leuconostoc citreum (strain KM20)).